Here is a 902-residue protein sequence, read N- to C-terminus: MFSSILRKVFGSRNDRLLKKLRKNVDAINALEAEFEKLSDEALKAKTDEFKARIEKGEALDNILVEAFATVREASKRVYGMRHFDVQMLGGQVLHEGKISEMRTGEGKTLTATLPTYLNALSGKGVHVVTVNDYLARRDAEWSNQLFTFLGMRVGCNIPGMSPEQKRDAYQADVTYGTNNEFGFDYLRDNMAFSPQDRVQRPLNYAVVDEVDSILIDEARTPLIISGQAEDSSELYRRINTIIPKLVQQEKEDEEGQEGDGDYTIDLKAKQIHLTERGQLHVEEILHEESLLPEGESLFAAGNISLLHHINAALRAHKLFSKDVDYIVKEDQIVIVDEHTGRTMEGRRWSEGLHQAVEAKEGVRIQNENQTLASITFQNYFRLYNKLAGMTGTADTEAFEFNHIYGLETVVIPTNRPMQRKDMPDLIYLTAEEKYEAIVEDIKACVKRGQPTLVGTVSIENSELISRILKKSKIPHKVLNAKFHEHEADIVAQAGKPGAVTIATNMAGRGTDIVLGGNWQAELEKIENPTESQIEKVKAAWKESHDAVLAAGGLHIIGTERHESRRIDNQLRGRSGRQGDPGSSRFYLSLDDALMRIFASEKMGNMMKRLGMERGEAIEHPWVTRAIENAQRKVEGRNFDIRKQLLEYDDVANDQRKVIYEQRNELLDEGDISETIAVIREDVVSSVVDEYIPPQSLEEMWDVSGLEERMRADFAVDLPIKTWLENDDKLYEEKLRERILNEVVDAYKQKEAVVGEQVLRQFEKAVMLQNLDSHWKEHLAAMDHLRQGIHLRGYAQKNPKQEYKRESFALFSEMLEALKVEVITILARVKVQAEEDVQKVEEQRRQADDVPKNFEHEDATAAPEEASDQVRTQVREGAKVGRNDPCPCGSGKKYKQCHGKLK.

ATP contacts are provided by residues Q87, 105–109 (GEGKT), and D512. Disordered stretches follow at residues 565–584 (RRIDNQLRGRSGRQGDPGSS) and 840–902 (VEEQ…GKLK). Composition is skewed to basic and acidic residues over residues 840–859 (VEEQRRQADDVPKNFEHEDA) and 873–882 (QVREGAKVGR). Residues C886, C888, C897, and H898 each contribute to the Zn(2+) site. The segment covering 892–902 (KKYKQCHGKLK) has biased composition (basic residues).

This sequence belongs to the SecA family. In terms of assembly, monomer and homodimer. Part of the essential Sec protein translocation apparatus which comprises SecA, SecYEG and auxiliary proteins SecDF-YajC and YidC. The cofactor is Zn(2+).

Its subcellular location is the cell inner membrane. It localises to the cytoplasm. The enzyme catalyses ATP + H2O + cellular proteinSide 1 = ADP + phosphate + cellular proteinSide 2.. Its function is as follows. Part of the Sec protein translocase complex. Interacts with the SecYEG preprotein conducting channel. Has a central role in coupling the hydrolysis of ATP to the transfer of proteins into and across the cell membrane, serving both as a receptor for the preprotein-SecB complex and as an ATP-driven molecular motor driving the stepwise translocation of polypeptide chains across the membrane. This is Protein translocase subunit SecA from Alteromonas mediterranea (strain DSM 17117 / CIP 110805 / LMG 28347 / Deep ecotype).